We begin with the raw amino-acid sequence, 169 residues long: MALVEGNNGVSGGAVSFSEEQEALVLKSWAIMKKDSANIGLRFFLKIFEVAPSASQMFSFLRNSDVPLEKNPKLKTHAMSVFVMTCEAAAQLRKAGKVTVRDTTLKRLGATHFKYGVGDAHFEVTRFALLETIKEAVPVDMWSPAMKSAWSEAYNQLVAAIKQEMKPAE.

Positions 16-166 constitute a Globin domain; it reads SFSEEQEALV…LVAAIKQEMK (151 aa). Positions 49–53 match the Homodimerization motif; sequence EVAPS. Heme b-binding residues include Ser-59, Lys-73, His-77, Arg-107, Thr-111, and His-112. The Homodimerization motif lies at 119–131; it reads DAHFEVTRFALLE.

It belongs to the plant globin family. In terms of assembly, homodimer. The cofactor is heme b. Expressed in leaves, but not in roots. Present in embryonic organs including embryos, coleoptiles and seminal roots.

The protein localises to the cytoplasm. Its subcellular location is the nucleus. It carries out the reaction Fe(III)-heme b-[protein] + nitric oxide + H2O = Fe(II)-heme b-[protein] + nitrite + 2 H(+). In terms of biological role, phytoglobin that reduces nitrite to nitric oxide under anoxic conditions (e.g. during flooding or in waterlogged soil). May not function as an oxygen storage or transport protein. Has an unusually high affinity for O(2) through an hexacoordinate heme iron because of a very low dissociation constant. Promotes tolerance to low potassium K(+) conditions. The protein is Anaerobic nitrite reductase NSHB2 of Oryza sativa subsp. japonica (Rice).